A 522-amino-acid polypeptide reads, in one-letter code: Peptide chain release factor 3 (522 aa).

The tr-type G domain maps to alanine 10–serine 277. GTP-binding positions include serine 19–threonine 26, aspartate 87–histidine 91, and asparagine 141–aspartate 144.

This sequence belongs to the TRAFAC class translation factor GTPase superfamily. Classic translation factor GTPase family. PrfC subfamily.

It is found in the cytoplasm. Functionally, increases the formation of ribosomal termination complexes and stimulates activities of RF-1 and RF-2. It binds guanine nucleotides and has strong preference for UGA stop codons. It may interact directly with the ribosome. The stimulation of RF-1 and RF-2 is significantly reduced by GTP and GDP, but not by GMP. This chain is Peptide chain release factor 3, found in Listeria monocytogenes serovar 1/2a (strain ATCC BAA-679 / EGD-e).